The sequence spans 3655 residues: NuA4 acetyltransferase complex subunit Tra2 (3655 aa).

The tract at residues 8-2459 (SLSSSIELLK…REYHIRLLGK (2452 aa)) is HEAT. 26 HEAT repeats span residues 46-89 (QLYA…CAHR), 94-131 (QYAQSCVLSFISLIKADNEEVAVFCLKVIMDIFKTFKF), 149-188 (TNLPYLIPSIFVENPKSNEEENTTLAFGSYLSTETSIIQQ), 230-268 (PGVQAIIPCFLKMVQIDVPIDIASYAMIEKDSSIDFIEF), 300-338 (LSEKDIIPDIVIKLLRRCPFDMCFARKELLVATRHILST), 374-412 (STLADLLHHVRDELNETQIRKSIMIYSTNMHDLTLSIGL), 438-475 (FLLLSIFDSFVNKFSELNDSLDQFFKKKYEEEIKETKS), 606-643 (IFLKVFETNLPTFFDQLKKNLTLFHIPQFLLSNESTSS), 644-683 (KFLNILLRFLLSRIEELGSSDIRHGSVLLRLFRLSFVTVS), 735-772 (SLYKEVMPLLHALLEAFNSLLISARTPKEKDLFTELCL), 783-820 (PYMSYLMRPLVMSLKSSQELVSQGLRTFELCLDNLTPD), 828-867 (PYIEDLMNALWSHLQPLPYNYNHSHTALKILGKLGGRNRK), 1100-1141 (AFIL…QDHS), 1147-1184 (DRQVDILTALFFTLKDTTSEVPTVCKDHVMDVLKQLFR), 1193-1230 (EIAPGILGHLVLELSNHNSVVRSSTQKLLSLLSELSNT), 1429-1470 (RKLL…LFHL), 1665-1704 (NLVSDLTAHLVKKIEEPDLENNVKLILNLILSKDYGFLLK), 1709-1746 (GILLTYLNQNVSSLEKCNQIFSIFYEVFFQHPSTNVYA), 1753-1790 (IGALQIISFFLKNVPEITVQHQTEMLKMCSLFGNSEDV), 1808-1846 (QFPYELVNVVYMALLKSSPIEVRHLVKSSFDNIFSYIFS), 1891-1934 (EHRG…WNDL), 1973-2011 (SEAISLLERLLSSGTWASLGMKLSFFTKSITHFDATDAN), 2036-2073 (ENLSDLKFLLEKSLENESVGVQSAIGNFVSTILTLSNT), 2120-2157 (DALHTLLPGFMRCFHKVAKEFLSLGSQPSGNSLNLQIV), 2183-2221 (DQRRWFLSALVQIIEKSSSYEICNYLLEIVRGWIMNSPV), and 2401-2438 (DFVLPVLSLQFSNSKIAEYLWRDFFNASVCSFTKDEIP). The interval 2460 to 3655 (TPNVLETILT…QMDQLWQAWL (1196 aa)) is head. The region spanning 2484–3045 (LLVYLSKTYG…HFQLRTAYED (562 aa)) is the FAT domain. Positions 3059–3105 (RGNSRLRENDSSSDNKSKDLSPSGSFSSVSQFNSKNGSPSSIDSSEK) are disordered. Over residues 3063–3077 (RLRENDSSSDNKSKD) the composition is skewed to basic and acidic residues. Positions 3078-3092 (LSPSGSFSSVSQFNS) are enriched in low complexity. Positions 3285-3625 (VPNVDLVRGH…VISHNVPEDL (341 aa)) constitute a PI3K/PI4K catalytic domain. The tract at residues 3291–3297 (VRGHTMC) is G-loop. The segment at 3491–3499 (NIGGRSPQK) is catalytic loop. The activation loop stretch occupies residues 3511–3536 (SQDLLPSMTSNQPVFHNTEAVPFRLT). The FATC domain maps to 3623–3655 (EDLPLNQTLVDLVSQATNPQQLAQMDQLWQAWL).

It belongs to the PI3/PI4-kinase family. TRA1 subfamily. In terms of assembly, component of the NuA4 acetyltransferase complex. Tra1 is the scaffold subunit for binding to a variety of transcription activators or transcription factors to recruit NuA4 for targeted gene activation. Requires Hsp90 and its co-chaperone, the Triple-T complex (TTT), for its incorporation into NuA4. Interacts with tel2.

Its function is as follows. Component of the NuA4 histone H4/H2A acetyltransferase involved in transcription and DNA repair. This is NuA4 acetyltransferase complex subunit Tra2 from Schizosaccharomyces pombe (strain 972 / ATCC 24843) (Fission yeast).